We begin with the raw amino-acid sequence, 486 residues long: Probable glycine dehydrogenase (decarboxylating) subunit 2 (486 aa).

The residue at position 269 (lysine 269) is an N6-(pyridoxal phosphate)lysine.

This sequence belongs to the GcvP family. C-terminal subunit subfamily. The glycine cleavage system is composed of four proteins: P, T, L and H. In this organism, the P 'protein' is a heterodimer of two subunits. Pyridoxal 5'-phosphate is required as a cofactor.

The enzyme catalyses N(6)-[(R)-lipoyl]-L-lysyl-[glycine-cleavage complex H protein] + glycine + H(+) = N(6)-[(R)-S(8)-aminomethyldihydrolipoyl]-L-lysyl-[glycine-cleavage complex H protein] + CO2. The glycine cleavage system catalyzes the degradation of glycine. The P protein binds the alpha-amino group of glycine through its pyridoxal phosphate cofactor; CO(2) is released and the remaining methylamine moiety is then transferred to the lipoamide cofactor of the H protein. The polypeptide is Probable glycine dehydrogenase (decarboxylating) subunit 2 (Chlorobium phaeobacteroides (strain DSM 266 / SMG 266 / 2430)).